Here is a 518-residue protein sequence, read N- to C-terminus: Ell-associated factor Eaf (518 aa).

Composition is skewed to polar residues over residues 119–128 (KTRSEMTNKP) and 163–182 (ENST…SRRN). Disordered regions lie at residues 119-216 (KTRS…PAWH) and 241-518 (ALHN…DDDD). Phosphoserine is present on S192. Composition is skewed to polar residues over residues 253–265 (ANIS…SSVG) and 274–284 (MGKQRQASSQG). Positions 289–342 (QQQTQRSSPPMQQQQQQQNYGRGGANNNYAQQLHQQQQQQQQQQLQQQQQQMQQ) are enriched in low complexity. A compositionally biased stretch (polar residues) spans 343–355 (RASFSHSNHSNSM). A compositionally biased stretch (low complexity) spans 368–377 (AAQSMAQAAA). Residues 397-412 (ESSDSDSGSDSDDSTE) are compositionally biased toward acidic residues. 3 stretches are compositionally biased toward low complexity: residues 418–428 (HQQQQPPGQLS), 463–476 (QQQQ…QQQQ), and 500–518 (NDLL…DDDD).

Belongs to the EAF family.

It is found in the nucleus. Its function is as follows. Promotes transcriptional elongation by Su(Tpl)/ELL. Essential for development. The polypeptide is Ell-associated factor Eaf (Drosophila mojavensis (Fruit fly)).